Reading from the N-terminus, the 291-residue chain is Popeye domain-containing protein 3 (291 aa).

Residue Asn4 is glycosylated (N-linked (GlcNAc...) asparagine). The next 3 helical transmembrane spans lie at 27-44 (GAIYHLASILFVVGFMGG), 48-70 (FGLLYVFSLLGLGFLCSAVWAWV), and 77-99 (IFSWNFVLFVICFMQFVHIAYQV).

The protein belongs to the popeye family. As to expression, expressed predominantly in skeletal muscle (at protein level). Also detected in heart.

The protein resides in the membrane. May play a role in the maintenance of heart function mediated, at least in part, through cAMP-binding. May play a role in the regulation of KCNK2/TREK-1-mediated current amplitude. In Homo sapiens (Human), this protein is Popeye domain-containing protein 3 (POPDC3).